Here is a 161-residue protein sequence, read N- to C-terminus: Protein-export protein SecB (161 aa).

The protein belongs to the SecB family. As to quaternary structure, homotetramer, a dimer of dimers. One homotetramer interacts with 1 SecA dimer.

The protein localises to the cytoplasm. Its function is as follows. One of the proteins required for the normal export of preproteins out of the cell cytoplasm. It is a molecular chaperone that binds to a subset of precursor proteins, maintaining them in a translocation-competent state. It also specifically binds to its receptor SecA. This is Protein-export protein SecB from Shewanella pealeana (strain ATCC 700345 / ANG-SQ1).